The sequence spans 125 residues: Large ribosomal subunit protein bL12 (125 aa).

The protein belongs to the bacterial ribosomal protein bL12 family. As to quaternary structure, homodimer. Part of the ribosomal stalk of the 50S ribosomal subunit. Forms a multimeric L10(L12)X complex, where L10 forms an elongated spine to which 2 to 4 L12 dimers bind in a sequential fashion. Binds GTP-bound translation factors.

Its function is as follows. Forms part of the ribosomal stalk which helps the ribosome interact with GTP-bound translation factors. Is thus essential for accurate translation. The sequence is that of Large ribosomal subunit protein bL12 from Rickettsia prowazekii (strain Madrid E).